A 263-amino-acid polypeptide reads, in one-letter code: 4-hydroxy-2-oxo-heptane-1,7-dioate aldolase (263 aa).

Histidine 45 serves as the catalytic Proton acceptor. Residue glutamine 147 coordinates substrate. Residue glutamate 149 coordinates a divalent metal cation. Alanine 174 and aspartate 175 together coordinate substrate. Aspartate 175 lines the a divalent metal cation pocket.

Belongs to the HpcH/HpaI aldolase family. Homohexamer; trimer of dimers. A divalent metal cation serves as cofactor.

It catalyses the reaction 4-hydroxy-2-oxoheptanedioate = succinate semialdehyde + pyruvate. It functions in the pathway aromatic compound metabolism; 4-hydroxyphenylacetate degradation; pyruvate and succinate semialdehyde from 4-hydroxyphenylacetate: step 7/7. Catalyzes the reversible retro-aldol cleavage of 4-hydroxy-2-ketoheptane-1,7-dioate (HKHD) to pyruvate and succinic semialdehyde. This chain is 4-hydroxy-2-oxo-heptane-1,7-dioate aldolase, found in Salmonella newport (strain SL254).